Consider the following 386-residue polypeptide: Synaptotagmin-5 (386 aa).

The span at 1-16 (MFPEPPTPGSPAPETP) shows a compositional bias: pro residues. Residues 1-21 (MFPEPPTPGSPAPETPPDSSR) are disordered. Over 1-24 (MFPEPPTPGSPAPETPPDSSRIRQ) the chain is Vesicular. Residues 25-45 (GAVPAWVLATILLGSGLLVFS) traverse the membrane as a helical segment. Residues 46–386 (SCFCLYRKRC…PDRARPIPAP (341 aa)) are Cytoplasmic-facing. C2 domains follow at residues 108–227 (QLGR…QAWR) and 239–372 (KLGD…AQWH). Ca(2+) contacts are provided by leucine 138, aspartate 139, aspartate 145, aspartate 197, phenylalanine 198, aspartate 199, serine 202, aspartate 205, aspartate 270, aspartate 276, aspartate 330, and aspartate 332.

Belongs to the synaptotagmin family. Homodimer. Interacts with both alpha- and beta-tubulin. Ca(2+) is required as a cofactor. As to expression, expressed in kidney, adipose tissue, lung and heart, as well as at higher levels in brain.

Its subcellular location is the cytoplasmic vesicle. The protein resides in the secretory vesicle. The protein localises to the synaptic vesicle membrane. It is found in the recycling endosome membrane. Functionally, may be involved in Ca(2+)-dependent exocytosis of secretory vesicles through Ca(2+) and phospholipid binding to the C2 domain or may serve as Ca(2+) sensors in the process of vesicular trafficking and exocytosis. Regulates the Ca(2+)-dependent secretion of norepinephrine in PC12 cells. Required for export from the endocytic recycling compartment to the cell surface. This chain is Synaptotagmin-5 (Syt5), found in Rattus norvegicus (Rat).